Reading from the N-terminus, the 137-residue chain is Large ribosomal subunit protein uL16 (137 aa).

The protein belongs to the universal ribosomal protein uL16 family. Part of the 50S ribosomal subunit.

Functionally, binds 23S rRNA and is also seen to make contacts with the A and possibly P site tRNAs. This is Large ribosomal subunit protein uL16 from Leuconostoc citreum (strain KM20).